The chain runs to 74 residues: Guanine nucleotide-binding protein G(T) subunit gamma-T1 (74 aa).

C71 bears the Cysteine methyl ester mark. A lipid anchor (S-farnesyl cysteine) is attached at C71. Positions V72 to S74 are cleaved as a propeptide — removed in mature form.

Belongs to the G protein gamma family. As to quaternary structure, g proteins are composed of 3 units, alpha, beta and gamma. Retinal rod outer segment.

It is found in the cell membrane. Functionally, guanine nucleotide-binding proteins (G proteins) are involved as a modulator or transducer in various transmembrane signaling systems. The beta and gamma chains are required for the GTPase activity, for replacement of GDP by GTP, and for G protein-effector interaction. In Canis lupus familiaris (Dog), this protein is Guanine nucleotide-binding protein G(T) subunit gamma-T1 (GNGT1).